A 406-amino-acid chain; its full sequence is Peptidase T (406 aa).

Histidine 82 serves as a coordination point for Zn(2+). Aspartate 84 is an active-site residue. Zn(2+) is bound at residue aspartate 142. Residue glutamate 176 is the Proton acceptor of the active site. Zn(2+) is bound by residues glutamate 177, aspartate 199, and histidine 381.

The protein belongs to the peptidase M20B family. Zn(2+) serves as cofactor.

The protein localises to the cytoplasm. The enzyme catalyses Release of the N-terminal residue from a tripeptide.. Cleaves the N-terminal amino acid of tripeptides. In Streptococcus agalactiae serotype V (strain ATCC BAA-611 / 2603 V/R), this protein is Peptidase T.